A 360-amino-acid polypeptide reads, in one-letter code: Transcriptional coactivator MYCFIDRAFT_190109 (360 aa).

The region spanning 3-67 (GMALNQLLAC…GFLHEPRPGQ (65 aa)) is the HTH iclR-type domain. Positions 33–52 (ARDVADLTGVPETQLCRVVR) form a DNA-binding region, H-T-H motif.

The protein resides in the nucleus. Functionally, transcriptional coactivator; part of the gene cluster that mediates the biosynthesis of an emodin derivative that may be involved in black Sigatoka disease of banana. With MYCFIDRAFT_198930, coregulates the production of the PKS8-1 cluster product. The polypeptide is Transcriptional coactivator MYCFIDRAFT_190109 (Pseudocercospora fijiensis (strain CIRAD86) (Black leaf streak disease fungus)).